The chain runs to 336 residues: Biotin synthase (336 aa).

The region spanning 51–270 (NQVQCNQLLN…IALARIMMPK (220 aa)) is the Radical SAM core domain. [4Fe-4S] cluster-binding residues include cysteine 66, cysteine 70, and cysteine 73. Residues cysteine 110, cysteine 141, cysteine 201, and arginine 274 each coordinate [2Fe-2S] cluster.

Belongs to the radical SAM superfamily. Biotin synthase family. As to quaternary structure, homodimer. Requires [4Fe-4S] cluster as cofactor. The cofactor is [2Fe-2S] cluster.

The enzyme catalyses (4R,5S)-dethiobiotin + (sulfur carrier)-SH + 2 reduced [2Fe-2S]-[ferredoxin] + 2 S-adenosyl-L-methionine = (sulfur carrier)-H + biotin + 2 5'-deoxyadenosine + 2 L-methionine + 2 oxidized [2Fe-2S]-[ferredoxin]. It participates in cofactor biosynthesis; biotin biosynthesis; biotin from 7,8-diaminononanoate: step 2/2. Functionally, catalyzes the conversion of dethiobiotin (DTB) to biotin by the insertion of a sulfur atom into dethiobiotin via a radical-based mechanism. This is Biotin synthase from Rhodopseudomonas palustris (strain ATCC BAA-98 / CGA009).